The primary structure comprises 658 residues: UvrABC system protein B (658 aa).

The region spanning 25-182 (DSIRSGNKFN…LKLVDMGYKR (158 aa)) is the Helicase ATP-binding domain. 38-45 (GVTGSGKT) serves as a coordination point for ATP. The short motif at 91–114 (YYDYYQPEAYIPRQDLFIEKDSSI) is the Beta-hairpin element. One can recognise a Helicase C-terminal domain in the interval 433–596 (QVEVLFDRAK…TPRSASRNLE (164 aa)). A UVR domain is found at 623-658 (AKIVKELRKQMLEAAKNLEFEKAAALRDEIAKLREL).

The protein belongs to the UvrB family. Forms a heterotetramer with UvrA during the search for lesions. Interacts with UvrC in an incision complex.

It localises to the cytoplasm. In terms of biological role, the UvrABC repair system catalyzes the recognition and processing of DNA lesions. A damage recognition complex composed of 2 UvrA and 2 UvrB subunits scans DNA for abnormalities. Upon binding of the UvrA(2)B(2) complex to a putative damaged site, the DNA wraps around one UvrB monomer. DNA wrap is dependent on ATP binding by UvrB and probably causes local melting of the DNA helix, facilitating insertion of UvrB beta-hairpin between the DNA strands. Then UvrB probes one DNA strand for the presence of a lesion. If a lesion is found the UvrA subunits dissociate and the UvrB-DNA preincision complex is formed. This complex is subsequently bound by UvrC and the second UvrB is released. If no lesion is found, the DNA wraps around the other UvrB subunit that will check the other stand for damage. The protein is UvrABC system protein B of Campylobacter fetus subsp. fetus (strain 82-40).